A 1035-amino-acid chain; its full sequence is Isoleucine--tRNA ligase (1035 aa).

Positions 48-58 (PTANGRPHVGH) match the 'HIGH' region motif. The short motif at 589–593 (KMSKH) is the 'KMSKS' region element. ATP is bound at residue lysine 592.

This sequence belongs to the class-I aminoacyl-tRNA synthetase family. IleS type 2 subfamily. Monomer. Zn(2+) is required as a cofactor.

It is found in the cytoplasm. The enzyme catalyses tRNA(Ile) + L-isoleucine + ATP = L-isoleucyl-tRNA(Ile) + AMP + diphosphate. Catalyzes the attachment of isoleucine to tRNA(Ile). As IleRS can inadvertently accommodate and process structurally similar amino acids such as valine, to avoid such errors it has two additional distinct tRNA(Ile)-dependent editing activities. One activity is designated as 'pretransfer' editing and involves the hydrolysis of activated Val-AMP. The other activity is designated 'posttransfer' editing and involves deacylation of mischarged Val-tRNA(Ile). The sequence is that of Isoleucine--tRNA ligase from Clostridium acetobutylicum (strain ATCC 824 / DSM 792 / JCM 1419 / IAM 19013 / LMG 5710 / NBRC 13948 / NRRL B-527 / VKM B-1787 / 2291 / W).